The primary structure comprises 228 residues: 2,3-bisphosphoglycerate-dependent phosphoglycerate mutase (228 aa).

Substrate contacts are provided by residues 8–15, 21–22, R60, 87–90, K98, 114–115, and 183–184; these read RHGQSEWN, TG, ERHY, RR, and GN. Catalysis depends on H9, which acts as the Tele-phosphohistidine intermediate. The Proton donor/acceptor role is filled by E87.

The protein belongs to the phosphoglycerate mutase family. BPG-dependent PGAM subfamily.

It carries out the reaction (2R)-2-phosphoglycerate = (2R)-3-phosphoglycerate. It functions in the pathway carbohydrate degradation; glycolysis; pyruvate from D-glyceraldehyde 3-phosphate: step 3/5. Its function is as follows. Catalyzes the interconversion of 2-phosphoglycerate and 3-phosphoglycerate. This chain is 2,3-bisphosphoglycerate-dependent phosphoglycerate mutase, found in Staphylococcus aureus (strain MRSA252).